Reading from the N-terminus, the 387-residue chain is Phosphoglycerate kinase (387 aa).

Substrate contacts are provided by residues 21–23, Arg36, 59–62, Arg113, and Arg146; these read DLN and HLGR. Residues Lys197, Glu314, and 340–343 contribute to the ATP site; that span reads GGDT.

It belongs to the phosphoglycerate kinase family. In terms of assembly, monomer.

The protein resides in the cytoplasm. It carries out the reaction (2R)-3-phosphoglycerate + ATP = (2R)-3-phospho-glyceroyl phosphate + ADP. Its pathway is carbohydrate degradation; glycolysis; pyruvate from D-glyceraldehyde 3-phosphate: step 2/5. This is Phosphoglycerate kinase from Pseudomonas fluorescens (strain SBW25).